A 188-amino-acid chain; its full sequence is Molybdopterin synthase catalytic subunit (188 aa).

Polar residues predominate over residues 1-10 (MSTSETSSYT). A disordered region spans residues 1 to 21 (MSTSETSSYTPDIPSEPVTKT). Substrate contacts are provided by residues 123–124 (HR), Lys-139, and 146–148 (KLE).

The protein belongs to the MoaE family. MOCS2B subfamily. In terms of assembly, heterotetramer; composed of 2 small (MOCS2A) and 2 large (MOCS2B) subunits.

It is found in the cytoplasm. The enzyme catalyses 2 [molybdopterin-synthase sulfur-carrier protein]-C-terminal-Gly-aminoethanethioate + cyclic pyranopterin phosphate + H2O = molybdopterin + 2 [molybdopterin-synthase sulfur-carrier protein]-C-terminal Gly-Gly + 2 H(+). Its pathway is cofactor biosynthesis; molybdopterin biosynthesis. Functionally, catalytic subunit of the molybdopterin synthase complex, a complex that catalyzes the conversion of precursor Z into molybdopterin. Acts by mediating the incorporation of 2 sulfur atoms from thiocarboxylated MOCS2A into precursor Z to generate a dithiolene group. This is Molybdopterin synthase catalytic subunit from Phaeosphaeria nodorum (strain SN15 / ATCC MYA-4574 / FGSC 10173) (Glume blotch fungus).